Here is a 145-residue protein sequence, read N- to C-terminus: Basic phospholipase A2 cPt10 (145 aa).

The signal sequence occupies residues 1–21; sequence MYPAHLLVLLAVCVSLLGASA. Residues 22–27 constitute a propeptide that is removed on maturation; that stretch reads IPPLPL. Cystine bridges form between Cys38–Cys98, Cys54–Cys144, Cys56–Cys72, Cys71–Cys125, Cys78–Cys118, Cys87–Cys111, and Cys105–Cys116. Ca(2+) contacts are provided by Tyr55, Gly57, and Gly59. The active site involves His75. Asp76 lines the Ca(2+) pocket. The active site involves Asp119.

Belongs to the phospholipase A2 family. Group I subfamily. D49 sub-subfamily. The cofactor is Ca(2+). As to expression, expressed by the venom gland.

It is found in the secreted. It carries out the reaction a 1,2-diacyl-sn-glycero-3-phosphocholine + H2O = a 1-acyl-sn-glycero-3-phosphocholine + a fatty acid + H(+). In terms of biological role, PLA2 catalyzes the calcium-dependent hydrolysis of the 2-acyl groups in 3-sn-phosphoglycerides. The sequence is that of Basic phospholipase A2 cPt10 from Laticauda semifasciata (Black-banded sea krait).